Reading from the N-terminus, the 218-residue chain is Thiopurine S-methyltransferase (218 aa).

S-adenosyl-L-methionine contacts are provided by tryptophan 10, leucine 45, glutamate 66, and arginine 123.

It belongs to the class I-like SAM-binding methyltransferase superfamily. TPMT family.

It is found in the cytoplasm. The catalysed reaction is S-adenosyl-L-methionine + a thiopurine = S-adenosyl-L-homocysteine + a thiopurine S-methylether.. This is Thiopurine S-methyltransferase from Pseudomonas paraeruginosa (strain DSM 24068 / PA7) (Pseudomonas aeruginosa (strain PA7)).